Here is a 180-residue protein sequence, read N- to C-terminus: ATP synthase subunit delta (180 aa).

Belongs to the ATPase delta chain family. F-type ATPases have 2 components, F(1) - the catalytic core - and F(0) - the membrane proton channel. F(1) has five subunits: alpha(3), beta(3), gamma(1), delta(1), epsilon(1). CF(0) has four main subunits: a(1), b(1), b'(1) and c(10-14). The alpha and beta chains form an alternating ring which encloses part of the gamma chain. F(1) is attached to F(0) by a central stalk formed by the gamma and epsilon chains, while a peripheral stalk is formed by the delta, b and b' chains.

It localises to the cellular thylakoid membrane. F(1)F(0) ATP synthase produces ATP from ADP in the presence of a proton or sodium gradient. F-type ATPases consist of two structural domains, F(1) containing the extramembraneous catalytic core and F(0) containing the membrane proton channel, linked together by a central stalk and a peripheral stalk. During catalysis, ATP synthesis in the catalytic domain of F(1) is coupled via a rotary mechanism of the central stalk subunits to proton translocation. Its function is as follows. This protein is part of the stalk that links CF(0) to CF(1). It either transmits conformational changes from CF(0) to CF(1) or is implicated in proton conduction. This is ATP synthase subunit delta from Prochlorococcus marinus (strain MIT 9312).